A 329-amino-acid polypeptide reads, in one-letter code: Delta-aminolevulinic acid dehydratase (329 aa).

Positions 122, 124, 131, and 132 each coordinate Zn(2+). K199 functions as the Schiff-base intermediate with substrate in the catalytic mechanism. Residue K199 is modified to N6-succinyllysine. Residue R209 coordinates 5-aminolevulinate. Phosphoserine is present on S215. R221 provides a ligand contact to 5-aminolevulinate. C223 contacts Zn(2+). K252 serves as the catalytic Schiff-base intermediate with substrate. Residue K252 is modified to N6-succinyllysine. Residues S279 and Y318 each coordinate 5-aminolevulinate.

It belongs to the ALAD family. Homooctamer; active form. Homohexamer; low activity form. Zn(2+) serves as cofactor.

It is found in the cytoplasm. The protein resides in the cytosol. The catalysed reaction is 2 5-aminolevulinate = porphobilinogen + 2 H2O + H(+). It functions in the pathway porphyrin-containing compound metabolism; protoporphyrin-IX biosynthesis; coproporphyrinogen-III from 5-aminolevulinate: step 1/4. Its activity is regulated as follows. Can alternate between a fully active homooctamer and a low-activity homohexamer. A bound magnesium ion may promote the assembly of the fully active homooctamer. The magnesium-binding site is absent in the low-activity homohexamer. Inhibited by compounds that favor the hexameric state. Inhibited by divalent lead ions. The lead ions partially displace the zinc cofactor. Functionally, catalyzes an early step in the biosynthesis of tetrapyrroles. Binds two molecules of 5-aminolevulinate per subunit, each at a distinct site, and catalyzes their condensation to form porphobilinogen. This Bos taurus (Bovine) protein is Delta-aminolevulinic acid dehydratase (ALAD).